The sequence spans 409 residues: MARAKFERNKPHVNIGTIGHVDHGKTTLTAAITMSLAAQGKAKARNYADIDAAPEEKARGITINTAHVEYETEGRHYAHVDCPGHADYVKNMITGAAQMDGAILVVSAADGPMPQTREHILLAKQVGVPNIVIFLNKQDMVDDEELLELVELEVRELLSDYDFDGDNIPIVAGSALQAVEALTANPGIGKGENEWVDKILSLMDEVDGYIPQPERDVDKPFLMAVEDVFSITGRGTVATGRIERGKIKVGETVELVGIKDTRNSTVTGVEMFQKILDEGMAGDNVGLLLRGMQKDDIQRGMVLAKSGSITPHKKFESEVYVLKKEEGGRHTPFFPNYRPQFYIRTTDVTGAIESFTADDGSVAEMVMPGDRIKMTVQLINPVAIEQGMRFAIREGGRTIGAGVVSKIVE.

Residues 10–214 (KPHVNIGTIG…EVDGYIPQPE (205 aa)) form the tr-type G domain. The tract at residues 19 to 26 (GHVDHGKT) is G1. 19–26 (GHVDHGKT) serves as a coordination point for GTP. A Mg(2+)-binding site is contributed by Thr26. The tract at residues 60-64 (GITIN) is G2. The segment at 81–84 (DCPG) is G3. GTP-binding positions include 81 to 85 (DCPGH) and 136 to 139 (NKQD). Residues 136 to 139 (NKQD) form a G4 region. A G5 region spans residues 174-176 (SAL).

It belongs to the TRAFAC class translation factor GTPase superfamily. Classic translation factor GTPase family. EF-Tu/EF-1A subfamily. Monomer.

It localises to the cytoplasm. It catalyses the reaction GTP + H2O = GDP + phosphate + H(+). In terms of biological role, GTP hydrolase that promotes the GTP-dependent binding of aminoacyl-tRNA to the A-site of ribosomes during protein biosynthesis. The sequence is that of Elongation factor Tu from Trichodesmium erythraeum (strain IMS101).